Reading from the N-terminus, the 164-residue chain is Pyruvoyl-dependent arginine decarboxylase (164 aa).

S52 carries the pyruvic acid (Ser) modification.

Belongs to the PdaD family. Requires pyruvate as cofactor.

It carries out the reaction L-arginine + H(+) = agmatine + CO2. The sequence is that of Pyruvoyl-dependent arginine decarboxylase from Methanococcus maripaludis (strain C7 / ATCC BAA-1331).